We begin with the raw amino-acid sequence, 59 residues long: Conotoxin Bu1.2 (59 aa).

Residues 1-16 form the signal peptide; the sequence is MFTVFLLVVLATTVVS. Residues 17 to 42 constitute a propeptide that is removed on maturation; the sequence is FSTDDESDGSNEEPSADQAARSAMNR. Positions 18–43 are disordered; the sequence is STDDESDGSNEEPSADQAARSAMNRP. A compositionally biased stretch (acidic residues) spans 19–31; it reads TDDESDGSNEEPS. Intrachain disulfides connect Cys-46–Cys-52 and Cys-47–Cys-57. Glycine amide is present on Gly-58.

It belongs to the conotoxin A superfamily. In terms of tissue distribution, expressed by the venom duct.

The protein resides in the secreted. The polypeptide is Conotoxin Bu1.2 (Conus bullatus (Bubble cone)).